A 380-amino-acid chain; its full sequence is Crotonobetainyl-CoA reductase (380 aa).

It belongs to the acyl-CoA dehydrogenase family. In terms of assembly, homotetramer. Requires FAD as cofactor.

It localises to the cytoplasm. The enzyme catalyses 4-(trimethylamino)butanoyl-CoA + oxidized [electron-transfer flavoprotein] + H(+) = crotonobetainyl-CoA + reduced [electron-transfer flavoprotein]. The protein operates within amine and polyamine metabolism; carnitine metabolism. Functionally, catalyzes the reduction of crotonobetainyl-CoA to gamma-butyrobetainyl-CoA. This Shigella flexneri serotype 5b (strain 8401) protein is Crotonobetainyl-CoA reductase.